The chain runs to 160 residues: Endoribonuclease YbeY (160 aa).

Zn(2+) contacts are provided by histidine 125, histidine 129, and histidine 135.

This sequence belongs to the endoribonuclease YbeY family. Zn(2+) is required as a cofactor.

The protein resides in the cytoplasm. Functionally, single strand-specific metallo-endoribonuclease involved in late-stage 70S ribosome quality control and in maturation of the 3' terminus of the 16S rRNA. This chain is Endoribonuclease YbeY, found in Leuconostoc mesenteroides subsp. mesenteroides (strain ATCC 8293 / DSM 20343 / BCRC 11652 / CCM 1803 / JCM 6124 / NCDO 523 / NBRC 100496 / NCIMB 8023 / NCTC 12954 / NRRL B-1118 / 37Y).